Consider the following 433-residue polypeptide: Phosphoribosylamine--glycine ligase (433 aa).

The 207-residue stretch at 111 to 317 folds into the ATP-grasp domain; that stretch reads EFMARNNIKG…FVDICEAIVD (207 aa). 138–194 serves as a coordination point for ATP; that stretch reads EDNPDVVVKPAGLTGGKGVKVMGEHMHTLEEAREYVKSVLEHDRVVIEERLKGEEVT. Mg(2+) is bound by residues glutamine 275, glutamate 287, and asparagine 289. Residues glutamine 275, glutamate 287, and asparagine 289 each coordinate Mn(2+).

Belongs to the GARS family. Mg(2+) serves as cofactor. Requires Mn(2+) as cofactor.

It catalyses the reaction 5-phospho-beta-D-ribosylamine + glycine + ATP = N(1)-(5-phospho-beta-D-ribosyl)glycinamide + ADP + phosphate + H(+). Its pathway is purine metabolism; IMP biosynthesis via de novo pathway; N(1)-(5-phospho-D-ribosyl)glycinamide from 5-phospho-alpha-D-ribose 1-diphosphate: step 2/2. The sequence is that of Phosphoribosylamine--glycine ligase from Methanocella arvoryzae (strain DSM 22066 / NBRC 105507 / MRE50).